A 78-amino-acid chain; its full sequence is 4-methyl-3-hydroxyanthranilic acid carrier protein (78 aa).

Ser33 is subject to O-(pantetheine 4'-phosphoryl)serine.

Belongs to the acyl carrier protein (ACP) family. Post-translationally, 4'-phosphopantetheine is transferred from CoA to a specific serine of the apo-form of this carrier protein.

It participates in antibiotic biosynthesis. Involved in the biosynthesis of actinomycin. Acts as a carrier in the transfer and thioesterification of 4-methyl-3-hydroxyanthranilic acid (4-MHA). This chain is 4-methyl-3-hydroxyanthranilic acid carrier protein, found in Streptomyces anulatus (Streptomyces chrysomallus).